A 249-amino-acid polypeptide reads, in one-letter code: MLFPDDFSTWEQTFQELMQEEKPGAKWSLHLDKNIVPDGAALGWRQHQQTVLGRFQCSRCCRSWTSAQVMILCHMYPDTLKSQGQARMRIFGQKCQKCFGCQFETPKFSTEIIKRILNNLVNYILQRYYGHRKIALTSNASLGEKVTLDGPHDTRNCEACSLNSHGRCALAHKVKPPRSPSPLPKSSSPSKSCPPPPQTRNTDFGNKTFQDFGNRTFQGCREPPQREIEPPLFLFLSIAAFALFSLFTR.

At 1 to 227 the chain is on the cytoplasmic side; sequence MLFPDDFSTW…QGCREPPQRE (227 aa). A 3CxxC-type zinc finger spans residues 50–162; sequence TVLGRFQCSR…DTRNCEACSL (113 aa). The interval 173–208 is disordered; sequence KVKPPRSPSPLPKSSSPSKSCPPPPQTRNTDFGNKT. Residues 199–208 are compositionally biased toward polar residues; sequence TRNTDFGNKT. Residues 228 to 248 form a helical membrane-spanning segment; the sequence is IEPPLFLFLSIAAFALFSLFT.

This sequence belongs to the TMEM7 family. In terms of assembly, interacts with TASR16. Interacts with OPRD1 and OPRM1; the interaction promotes cell surface localization of the OPDR1-OPRM1 heterodimer. Expressed at low levels in olfactory neurons. Upon viral infection, highly expressed in brain and different cells of nervous tissue.

Its subcellular location is the membrane. The protein resides in the cytoplasm. Its function is as follows. Chaperone protein that facilitates the trafficking and functional cell surface expression of some G-protein coupled receptors (GPCRs). Promotes functional expression of the bitter taste receptor TAS2R16. Also promotes functional expression of the opioid receptor heterodimer OPRD1-OPRM1. In addition, acts as a potent IFN-inducible suppressor of pathogens including lyssavirus rabies, influenza A or yellow fever virus. Mechanistically, associates with the viral replicase, binds viral RNA, and thereby suppresses viral genome amplification that replicates at the endoplasmic reticulum. In addition, restores antiviral signaling by interacting with and sequestering influenza virus protein NS1. This is Receptor-transporting protein 4 (Rtp4) from Mus musculus (Mouse).